We begin with the raw amino-acid sequence, 385 residues long: Cyclin-A3-2 (385 aa).

Residues 1 to 110 (MADKENSTPA…STSTASPSSG (110 aa)) form a disordered region. Composition is skewed to low complexity over residues 7-41 (STPA…GAPP), 74-88 (PSSK…AAAP), and 96-110 (PVSS…PSSG).

The protein belongs to the cyclin family. Cyclin AB subfamily.

This Oryza sativa subsp. japonica (Rice) protein is Cyclin-A3-2 (CYCA3-2).